Reading from the N-terminus, the 521-residue chain is Replicase polyprotein 1ab (521 aa).

The AV-Nsp11N/CoV-Nsp15M domain occupies Gly1 to Val58. Positions Glu75–Pro216 constitute a NendoU domain. Residues His104, His119, Lys159, Lys263, Asp347, Lys391, and Glu424 contribute to the active site. One can recognise a Nidovirus-type SAM-dependent 2'-O-MTase domain in the interval Gln219–Val518.

Functionally, the replicase polyprotein of coronaviruses is a multifunctional protein: it contains the activities necessary for the transcription of negative stranded RNA, leader RNA, subgenomic mRNAs and progeny virion RNA as well as proteinases responsible for the cleavage of the polyprotein into functional products. In terms of biological role, nendoU is a Mn(2+)-dependent, uridylate-specific enzyme, which leaves 2'-3'-cyclic phosphates 5' to the cleaved bond. The chain is Replicase polyprotein 1ab (rep) from Gallus gallus (Chicken).